The primary structure comprises 447 residues: Cysteine--tRNA ligase (447 aa).

Cys28 serves as a coordination point for Zn(2+). The 'HIGH' region signature appears at 30 to 40; that stretch reads PTVYNYIHIGN. Positions 211, 236, and 240 each coordinate Zn(2+). The short motif at 268–272 is the 'KMSKS' region element; that stretch reads KMSKS. Residue Lys271 coordinates ATP.

The protein belongs to the class-I aminoacyl-tRNA synthetase family. Monomer. Zn(2+) is required as a cofactor.

Its subcellular location is the cytoplasm. It carries out the reaction tRNA(Cys) + L-cysteine + ATP = L-cysteinyl-tRNA(Cys) + AMP + diphosphate. This Streptococcus pyogenes serotype M3 (strain ATCC BAA-595 / MGAS315) protein is Cysteine--tRNA ligase.